The following is a 498-amino-acid chain: Glycerol kinase (498 aa).

An ADP-binding site is contributed by Thr13. Thr13, Thr14, and Ser15 together coordinate ATP. Sn-glycerol 3-phosphate is bound at residue Thr13. Arg17 is an ADP binding site. The sn-glycerol 3-phosphate site is built by Arg83, Glu84, Tyr135, and Asp244. Positions 83, 84, 135, 244, and 245 each coordinate glycerol. The ADP site is built by Thr266 and Gly309. The ATP site is built by Thr266, Gly309, Gln313, and Gly410. Residues Gly410 and Asn414 each coordinate ADP.

Belongs to the FGGY kinase family. In terms of assembly, homotetramer and homodimer (in equilibrium).

The catalysed reaction is glycerol + ATP = sn-glycerol 3-phosphate + ADP + H(+). Its pathway is polyol metabolism; glycerol degradation via glycerol kinase pathway; sn-glycerol 3-phosphate from glycerol: step 1/1. With respect to regulation, activated by phosphorylation and inhibited by fructose 1,6-bisphosphate (FBP). Functionally, key enzyme in the regulation of glycerol uptake and metabolism. Catalyzes the phosphorylation of glycerol to yield sn-glycerol 3-phosphate. The polypeptide is Glycerol kinase (Symbiobacterium thermophilum (strain DSM 24528 / JCM 14929 / IAM 14863 / T)).